A 419-amino-acid chain; its full sequence is Gamma-glutamyl phosphate reductase (419 aa).

The protein belongs to the gamma-glutamyl phosphate reductase family.

The protein resides in the cytoplasm. The catalysed reaction is L-glutamate 5-semialdehyde + phosphate + NADP(+) = L-glutamyl 5-phosphate + NADPH + H(+). It functions in the pathway amino-acid biosynthesis; L-proline biosynthesis; L-glutamate 5-semialdehyde from L-glutamate: step 2/2. Functionally, catalyzes the NADPH-dependent reduction of L-glutamate 5-phosphate into L-glutamate 5-semialdehyde and phosphate. The product spontaneously undergoes cyclization to form 1-pyrroline-5-carboxylate. The chain is Gamma-glutamyl phosphate reductase from Caulobacter sp. (strain K31).